The primary structure comprises 802 residues: LPS-assembly protein LptD (802 aa).

The first 29 residues, 1 to 29 (MARLFSLKPLVLALGFCFGTHCAAADAVA), serve as a signal peptide directing secretion.

This sequence belongs to the LptD family. In terms of assembly, component of the lipopolysaccharide transport and assembly complex. Interacts with LptE and LptA.

Its subcellular location is the cell outer membrane. In terms of biological role, together with LptE, is involved in the assembly of lipopolysaccharide (LPS) at the surface of the outer membrane. The protein is LPS-assembly protein LptD of Neisseria meningitidis serogroup A / serotype 4A (strain DSM 15465 / Z2491).